The following is a 354-amino-acid chain: GTPase Obg (354 aa).

The 159-residue stretch at 1-159 (MKFVDEVKIH…RDLVLELKLL (159 aa)) folds into the Obg domain. Residues 160-333 (ADVGIVGYPN…LLDAVGRALF (174 aa)) enclose the OBG-type G domain. GTP-binding positions include 166–173 (GYPNAGKS), 191–195 (FTTLT), 212–215 (DIPG), 283–286 (TKID), and 314–316 (SAV). Residues Ser-173 and Thr-193 each coordinate Mg(2+).

This sequence belongs to the TRAFAC class OBG-HflX-like GTPase superfamily. OBG GTPase family. As to quaternary structure, monomer. Mg(2+) is required as a cofactor.

Its subcellular location is the cytoplasm. Its function is as follows. An essential GTPase which binds GTP, GDP and possibly (p)ppGpp with moderate affinity, with high nucleotide exchange rates and a fairly low GTP hydrolysis rate. Plays a role in control of the cell cycle, stress response, ribosome biogenesis and in those bacteria that undergo differentiation, in morphogenesis control. This Anaeromyxobacter dehalogenans (strain 2CP-1 / ATCC BAA-258) protein is GTPase Obg.